Here is a 59-residue protein sequence, read N- to C-terminus: Large ribosomal subunit protein bL32c (59 aa).

This sequence belongs to the bacterial ribosomal protein bL32 family.

The protein resides in the plastid. The protein localises to the chloroplast. This Physcomitrium patens (Spreading-leaved earth moss) protein is Large ribosomal subunit protein bL32c.